The sequence spans 210 residues: Na(+)-translocating NADH-quinone reductase subunit D (210 aa).

6 helical membrane passes run 11 to 31 (ILAPVLDNNPIALQVLGVCSA), 42 to 62 (FVMTIAVMFVTALSNFFVSLI), 72 to 92 (IIVQMAIIASLVIVVDQVLKA), 103 to 123 (VFVGLIITNCIVMGRAEAFAM), 131 to 151 (FIDGLGNGLGYGFVLITVGFF), and 178 to 198 (NGLMLLAPSAFFLIGFLIWAI).

Belongs to the NqrDE/RnfAE family. Composed of six subunits; NqrA, NqrB, NqrC, NqrD, NqrE and NqrF.

Its subcellular location is the cell inner membrane. It carries out the reaction a ubiquinone + n Na(+)(in) + NADH + H(+) = a ubiquinol + n Na(+)(out) + NAD(+). Its function is as follows. NQR complex catalyzes the reduction of ubiquinone-1 to ubiquinol by two successive reactions, coupled with the transport of Na(+) ions from the cytoplasm to the periplasm. NqrA to NqrE are probably involved in the second step, the conversion of ubisemiquinone to ubiquinol. The sequence is that of Na(+)-translocating NADH-quinone reductase subunit D from Vibrio atlanticus (strain LGP32) (Vibrio splendidus (strain Mel32)).